The primary structure comprises 119 residues: Large ribosomal subunit protein uL18 (119 aa).

The protein belongs to the universal ribosomal protein uL18 family. As to quaternary structure, part of the 50S ribosomal subunit; part of the 5S rRNA/L5/L18/L25 subcomplex. Contacts the 5S and 23S rRNAs.

Its function is as follows. This is one of the proteins that bind and probably mediate the attachment of the 5S RNA into the large ribosomal subunit, where it forms part of the central protuberance. This Xanthomonas campestris pv. campestris (strain 8004) protein is Large ribosomal subunit protein uL18.